The following is a 321-amino-acid chain: Ubiquitin-conjugating enzyme E2 U (321 aa).

Residues 4-153 (RAYLLLHRDF…LRLFNRPLQM (150 aa)) form the UBC core domain. Residue Cys-89 is the Glycyl thioester intermediate of the active site. The tract at residues 285–321 (WKSDTSLYENDTDEPREEEVEDLISWTNTLNTNTSED) is disordered. The segment covering 294–306 (NDTDEPREEEVED) has biased composition (acidic residues). Residues 309-321 (SWTNTLNTNTSED) show a composition bias toward polar residues.

Belongs to the ubiquitin-conjugating enzyme family. In terms of processing, autoubiquitinated in vitro in the presence of UBR5.

It carries out the reaction S-ubiquitinyl-[E1 ubiquitin-activating enzyme]-L-cysteine + [E2 ubiquitin-conjugating enzyme]-L-cysteine = [E1 ubiquitin-activating enzyme]-L-cysteine + S-ubiquitinyl-[E2 ubiquitin-conjugating enzyme]-L-cysteine.. It functions in the pathway protein modification; protein ubiquitination. Catalyzes the covalent attachment of ubiquitin to other proteins. The polypeptide is Ubiquitin-conjugating enzyme E2 U (UBE2U) (Homo sapiens (Human)).